Consider the following 244-residue polypeptide: uncharacterized protein (244 aa).

A run of 4 helical transmembrane segments spans residues 20 to 42, 49 to 67, 82 to 101, and 108 to 125; these read TITA…VVLI, FVYI…ATKV, TPSI…ASVF, and AFLV…ATPI.

The protein localises to the cell membrane. This is an uncharacterized protein from Archaeoglobus fulgidus (strain ATCC 49558 / DSM 4304 / JCM 9628 / NBRC 100126 / VC-16).